The chain runs to 103 residues: MRLKKNDNVLVIAGKDKGKTGKVRYAYPRTDRVLVEGVNMIKRHSRAKGQAKQAGIIEREAPLHVSNLMLLCSKCNKPARIGSRELADGKSVRYCKSCNEVID.

The protein belongs to the universal ribosomal protein uL24 family. As to quaternary structure, part of the 50S ribosomal subunit.

Its function is as follows. One of two assembly initiator proteins, it binds directly to the 5'-end of the 23S rRNA, where it nucleates assembly of the 50S subunit. Functionally, one of the proteins that surrounds the polypeptide exit tunnel on the outside of the subunit. This is Large ribosomal subunit protein uL24 from Dehalococcoides mccartyi (strain ATCC BAA-2100 / JCM 16839 / KCTC 5957 / BAV1).